Here is a 204-residue protein sequence, read N- to C-terminus: UPF0056 membrane protein TC_0241 (204 aa).

Transmembrane regions (helical) follow at residues 8–28, 46–66, 68–88, 107–127, 138–158, and 176–196; these read LTLL…FVAL, IFAL…FRLL, VSLP…AINM, IFYP…STLG, LVLG…FFSS, and FGIS…STAF.

The protein belongs to the UPF0056 (MarC) family.

The protein resides in the cell membrane. This is UPF0056 membrane protein TC_0241 from Chlamydia muridarum (strain MoPn / Nigg).